A 257-amino-acid polypeptide reads, in one-letter code: Putative carboxymethylenebutenolidase (257 aa).

Catalysis depends on residues C148, D195, and H226.

Belongs to the dienelactone hydrolase family.

The enzyme catalyses 2-(5-oxo-2,5-dihydrofuran-2-ylidene)acetate + H2O = 4-oxohex-2-enedioate + H(+). The polypeptide is Putative carboxymethylenebutenolidase (Saccharolobus solfataricus (strain ATCC 35092 / DSM 1617 / JCM 11322 / P2) (Sulfolobus solfataricus)).